A 248-amino-acid chain; its full sequence is Mannosylfructose-phosphate phosphatase (248 aa).

This sequence belongs to the sucrose phosphatase family.

It catalyses the reaction beta-D-fructofuranosyl alpha-D-mannopyranoside 6(F)-phosphate + H2O = beta-D-fructofuranosyl alpha-D-mannopyranoside + phosphate. The protein operates within carbohydrate metabolism; mannosylfructose biosynthesis; beta-D-fructofuranosyl alpha-D-mannopyranoside from D-fructose 6-phosphate and GDP-alpha-D-mannose: step 2/2. Its activity is regulated as follows. Inhibited by the phosphatase inhibitors fluoride, molybdate and orthovanadate. This is Mannosylfructose-phosphate phosphatase from Agrobacterium fabrum (strain C58 / ATCC 33970) (Agrobacterium tumefaciens (strain C58)).